The sequence spans 506 residues: Ecdysteroid UDP-glucosyltransferase (506 aa).

The N-terminal stretch at 1–18 (MTILCWLALLSTLTAVNA) is a signal peptide.

It belongs to the UDP-glycosyltransferase family. Post-translationally, glycosylated.

In terms of biological role, catalyzes the transfer of glucose from UDP-glucose to ecdysteroids which are insect molting hormones. Acts on the host at the organismal level to block its development, thereby increasing the yield of progeny virus. This chain is Ecdysteroid UDP-glucosyltransferase (EGT), found in Lepidoptera (butterflies and moths).